A 200-amino-acid chain; its full sequence is Mediator of RNA polymerase II transcription subunit 22 (200 aa).

Positions 93 to 122 (SVNEAIDQRNQQLRALQEECDRKLITLRDE) form a coiled coil. A disordered region spans residues 167–200 (SAPLLASPETGAGPLQSAAPVHSHGGGPGPTEHT). A compositionally biased stretch (gly residues) spans 190–200 (HGGGPGPTEHT).

Belongs to the Mediator complex subunit 22 family. As to quaternary structure, component of the Mediator complex, which is composed of MED1, MED4, MED6, MED7, MED8, MED9, MED10, MED11, MED12, MED13, MED13L, MED14, MED15, MED16, MED17, MED18, MED19, MED20, MED21, MED22, MED23, MED24, MED25, MED26, MED27, MED29, MED30, MED31, CCNC, CDK8 and CDC2L6/CDK11. The MED12, MED13, CCNC and CDK8 subunits form a distinct module termed the CDK8 module. Mediator containing the CDK8 module is less active than Mediator lacking this module in supporting transcriptional activation. Individual preparations of the Mediator complex lacking one or more distinct subunits have been variously termed ARC, CRSP, DRIP, PC2, SMCC and TRAP.

It localises to the nucleus. Component of the Mediator complex, a coactivator involved in the regulated transcription of nearly all RNA polymerase II-dependent genes. Mediator functions as a bridge to convey information from gene-specific regulatory proteins to the basal RNA polymerase II transcription machinery. Mediator is recruited to promoters by direct interactions with regulatory proteins and serves as a scaffold for the assembly of a functional preinitiation complex with RNA polymerase II and the general transcription factors. The sequence is that of Mediator of RNA polymerase II transcription subunit 22 (Med22) from Rattus norvegicus (Rat).